The chain runs to 651 residues: DNA mismatch repair protein MutL (651 aa).

The tract at residues 336-398 (RLDMTEPETG…ANSGYQPENP (63 aa)) is disordered. Positions 385–394 (ARESANSGYQ) are enriched in polar residues.

The protein belongs to the DNA mismatch repair MutL/HexB family.

This protein is involved in the repair of mismatches in DNA. It is required for dam-dependent methyl-directed DNA mismatch repair. May act as a 'molecular matchmaker', a protein that promotes the formation of a stable complex between two or more DNA-binding proteins in an ATP-dependent manner without itself being part of a final effector complex. The protein is DNA mismatch repair protein MutL of Pectobacterium atrosepticum (strain SCRI 1043 / ATCC BAA-672) (Erwinia carotovora subsp. atroseptica).